The primary structure comprises 149 residues: SsrA-binding protein (149 aa).

The protein belongs to the SmpB family.

The protein resides in the cytoplasm. Required for rescue of stalled ribosomes mediated by trans-translation. Binds to transfer-messenger RNA (tmRNA), required for stable association of tmRNA with ribosomes. tmRNA and SmpB together mimic tRNA shape, replacing the anticodon stem-loop with SmpB. tmRNA is encoded by the ssrA gene; the 2 termini fold to resemble tRNA(Ala) and it encodes a 'tag peptide', a short internal open reading frame. During trans-translation Ala-aminoacylated tmRNA acts like a tRNA, entering the A-site of stalled ribosomes, displacing the stalled mRNA. The ribosome then switches to translate the ORF on the tmRNA; the nascent peptide is terminated with the 'tag peptide' encoded by the tmRNA and targeted for degradation. The ribosome is freed to recommence translation, which seems to be the essential function of trans-translation. The sequence is that of SsrA-binding protein from Thermosipho africanus (strain TCF52B).